A 343-amino-acid chain; its full sequence is L-threonine 3-dehydrogenase (343 aa).

Cys-38 is a binding site for Zn(2+). Residues Thr-40 and His-43 each act as charge relay system in the active site. The Zn(2+) site is built by His-63, Glu-64, Cys-93, Cys-96, Cys-99, and Cys-107. NAD(+) contacts are provided by residues Ile-175, Asp-195, Arg-200, Leu-262–Ile-264, and Ile-286–Tyr-287.

The protein belongs to the zinc-containing alcohol dehydrogenase family. As to quaternary structure, homotetramer. Zn(2+) serves as cofactor.

It localises to the cytoplasm. The enzyme catalyses L-threonine + NAD(+) = (2S)-2-amino-3-oxobutanoate + NADH + H(+). It functions in the pathway amino-acid degradation; L-threonine degradation via oxydo-reductase pathway; glycine from L-threonine: step 1/2. Functionally, catalyzes the NAD(+)-dependent oxidation of L-threonine to 2-amino-3-ketobutyrate. The protein is L-threonine 3-dehydrogenase of Paraburkholderia xenovorans (strain LB400).